Here is a 353-residue protein sequence, read N- to C-terminus: 2-Hydroxyacid oxidase 2 (353 aa).

In terms of domain architecture, FMN hydroxy acid dehydrogenase spans 2–353 (PLVCLTDFRE…NQDLIQFSRL (352 aa)). FMN-binding positions include 77–79 (PTG), serine 106, and glutamine 128. Tyrosine 130 provides a ligand contact to a 2-oxocarboxylate. Position 156 (threonine 156) interacts with FMN. A 2-oxocarboxylate is bound at residue arginine 165. Residue lysine 224 coordinates FMN. Catalysis depends on histidine 248, which acts as the Proton acceptor. Position 251 (arginine 251) interacts with a 2-oxocarboxylate. FMN-binding positions include 279–283 (DGGIR) and 302–303 (GR). The Microbody targeting signal motif lies at 351 to 353 (SRL).

Belongs to the FMN-dependent alpha-hydroxy acid dehydrogenase family. As to quaternary structure, homotetramer. Requires FMN as cofactor.

The protein localises to the peroxisome. The enzyme catalyses a (2S)-2-hydroxycarboxylate + O2 = a 2-oxocarboxylate + H2O2. The catalysed reaction is 2-hydroxyhexadecanoate + O2 = 2-oxohexadecanoate + H2O2. It catalyses the reaction 2-hydroxyoctanoate + O2 = 2-oxooctanoate + H2O2. Its pathway is lipid metabolism; fatty acid metabolism. In terms of biological role, oxidase that catalyzes the oxidation of medium and long chain hydroxyacids such as 2-hydroxyhexadecanoate and 2-hydroxyoctanoate, to the correspondong 2-oxoacids. Its role in the oxidation of 2-hydroxy fatty acids may contribute to the general pathway of fatty acid alpha-oxidation. Active in vitro with the artificial electron acceptor 2,6-dichlorophenolindophenol (DCIP), but O2 is believed to be the physiological electron acceptor, leading to the production of H2O2. The chain is 2-Hydroxyacid oxidase 2 (HAO2) from Bos taurus (Bovine).